A 453-amino-acid polypeptide reads, in one-letter code: Bifunctional protein GlmU (453 aa).

The interval Met-1–Arg-226 is pyrophosphorylase. UDP-N-acetyl-alpha-D-glucosamine is bound by residues Leu-7–Gly-10, Lys-21, Gln-73, and Gly-78–Thr-79. Residue Asp-103 coordinates Mg(2+). Gly-140, Glu-155, Asn-170, and Asn-224 together coordinate UDP-N-acetyl-alpha-D-glucosamine. Mg(2+) is bound at residue Asn-224. Residues Lys-227–Ala-247 form a linker region. Positions Gly-248–Thr-453 are N-acetyltransferase. UDP-N-acetyl-alpha-D-glucosamine-binding residues include Arg-329 and Lys-347. The Proton acceptor role is filled by His-359. The UDP-N-acetyl-alpha-D-glucosamine site is built by Tyr-362 and Asn-373. Acetyl-CoA-binding positions include Ala-376, Asn-382 to Tyr-383, Ser-401, Ala-419, and Arg-436.

This sequence in the N-terminal section; belongs to the N-acetylglucosamine-1-phosphate uridyltransferase family. The protein in the C-terminal section; belongs to the transferase hexapeptide repeat family. In terms of assembly, homotrimer. Mg(2+) serves as cofactor.

It localises to the cytoplasm. It catalyses the reaction alpha-D-glucosamine 1-phosphate + acetyl-CoA = N-acetyl-alpha-D-glucosamine 1-phosphate + CoA + H(+). The enzyme catalyses N-acetyl-alpha-D-glucosamine 1-phosphate + UTP + H(+) = UDP-N-acetyl-alpha-D-glucosamine + diphosphate. Its pathway is nucleotide-sugar biosynthesis; UDP-N-acetyl-alpha-D-glucosamine biosynthesis; N-acetyl-alpha-D-glucosamine 1-phosphate from alpha-D-glucosamine 6-phosphate (route II): step 2/2. It functions in the pathway nucleotide-sugar biosynthesis; UDP-N-acetyl-alpha-D-glucosamine biosynthesis; UDP-N-acetyl-alpha-D-glucosamine from N-acetyl-alpha-D-glucosamine 1-phosphate: step 1/1. The protein operates within bacterial outer membrane biogenesis; LPS lipid A biosynthesis. In terms of biological role, catalyzes the last two sequential reactions in the de novo biosynthetic pathway for UDP-N-acetylglucosamine (UDP-GlcNAc). The C-terminal domain catalyzes the transfer of acetyl group from acetyl coenzyme A to glucosamine-1-phosphate (GlcN-1-P) to produce N-acetylglucosamine-1-phosphate (GlcNAc-1-P), which is converted into UDP-GlcNAc by the transfer of uridine 5-monophosphate (from uridine 5-triphosphate), a reaction catalyzed by the N-terminal domain. The polypeptide is Bifunctional protein GlmU (Cyanothece sp. (strain PCC 7425 / ATCC 29141)).